A 449-amino-acid polypeptide reads, in one-letter code: Adenylosuccinate synthetase (449 aa).

GTP is bound by residues 12–18 and 40–42; these read GDEGKGK and GHT. D13 (proton acceptor) is an active-site residue. D13 and G40 together coordinate Mg(2+). IMP is bound by residues 13-16, 38-41, T128, R142, Q223, T238, and R302; these read DEGK and NAGH. H41 serves as the catalytic Proton donor. Position 298–304 (298–304) interacts with substrate; the sequence is TTTGRRR. GTP-binding positions include R304, 330 to 332, and 412 to 414; these read KLD and SLG.

Belongs to the adenylosuccinate synthetase family. As to quaternary structure, homodimer. Mg(2+) is required as a cofactor.

Its subcellular location is the cytoplasm. It catalyses the reaction IMP + L-aspartate + GTP = N(6)-(1,2-dicarboxyethyl)-AMP + GDP + phosphate + 2 H(+). The protein operates within purine metabolism; AMP biosynthesis via de novo pathway; AMP from IMP: step 1/2. Functionally, plays an important role in the de novo pathway of purine nucleotide biosynthesis. Catalyzes the first committed step in the biosynthesis of AMP from IMP. This chain is Adenylosuccinate synthetase, found in Gloeothece citriformis (strain PCC 7424) (Cyanothece sp. (strain PCC 7424)).